Here is a 993-residue protein sequence, read N- to C-terminus: Vinculin (993 aa).

2 repeat units span residues 258-364 (DSDN…TKEI) and 373-480 (TNTQ…ELVD). Residues 258–480 (DSDNVTVMRK…LRNKLRELVD (223 aa)) form a 2 X repeats region. The tract at residues 730 to 797 (ITGAGGSRPP…PPPETDDEEE (68 aa)) is disordered. Positions 758–768 (VHDRIYIREDI) are enriched in basic and acidic residues. Residues 769 to 790 (PTPPRPPPPVEISPPPRPPPPP) show a composition bias toward pro residues.

This sequence belongs to the vinculin/alpha-catenin family. Exhibits self-association properties.

It localises to the cytoplasm. Its subcellular location is the cytoskeleton. The protein localises to the cell junction. It is found in the adherens junction. The protein resides in the cell membrane. In terms of biological role, involved in cell adhesion. May be involved in the attachment of the actin-based microfilaments to the plasma membrane. This is Vinculin from Brugia malayi (Filarial nematode worm).